The chain runs to 186 residues: Ribosome-recycling factor (186 aa).

The protein belongs to the RRF family.

The protein resides in the cytoplasm. Functionally, responsible for the release of ribosomes from messenger RNA at the termination of protein biosynthesis. May increase the efficiency of translation by recycling ribosomes from one round of translation to another. The sequence is that of Ribosome-recycling factor from Albidiferax ferrireducens (strain ATCC BAA-621 / DSM 15236 / T118) (Rhodoferax ferrireducens).